We begin with the raw amino-acid sequence, 95 residues long: Endoribonuclease VapD homolog (95 aa).

Belongs to the VapD ribonuclease family. Homodimer.

Cleaves ssRNA, mostly between U:A. This chain is Endoribonuclease VapD homolog, found in Helicobacter pylori (strain ATCC 700392 / 26695) (Campylobacter pylori).